We begin with the raw amino-acid sequence, 349 residues long: Probable dual-specificity RNA methyltransferase RlmN (349 aa).

Glu-94 serves as the catalytic Proton acceptor. The Radical SAM core domain occupies 100–321 (DEDRATLCVS…TQHGVFATIR (222 aa)). Cys-107 and Cys-332 are oxidised to a cystine. 3 residues coordinate [4Fe-4S] cluster: Cys-114, Cys-118, and Cys-121. Residues 159 to 160 (GE), Ser-191, 213 to 215 (SMH), and His-289 each bind S-adenosyl-L-methionine. The active-site S-methylcysteine intermediate is the Cys-332.

This sequence belongs to the radical SAM superfamily. RlmN family. It depends on [4Fe-4S] cluster as a cofactor.

It localises to the cytoplasm. It carries out the reaction adenosine(2503) in 23S rRNA + 2 reduced [2Fe-2S]-[ferredoxin] + 2 S-adenosyl-L-methionine = 2-methyladenosine(2503) in 23S rRNA + 5'-deoxyadenosine + L-methionine + 2 oxidized [2Fe-2S]-[ferredoxin] + S-adenosyl-L-homocysteine. It catalyses the reaction adenosine(37) in tRNA + 2 reduced [2Fe-2S]-[ferredoxin] + 2 S-adenosyl-L-methionine = 2-methyladenosine(37) in tRNA + 5'-deoxyadenosine + L-methionine + 2 oxidized [2Fe-2S]-[ferredoxin] + S-adenosyl-L-homocysteine. Functionally, specifically methylates position 2 of adenine 2503 in 23S rRNA and position 2 of adenine 37 in tRNAs. In Phocaeicola vulgatus (strain ATCC 8482 / DSM 1447 / JCM 5826 / CCUG 4940 / NBRC 14291 / NCTC 11154) (Bacteroides vulgatus), this protein is Probable dual-specificity RNA methyltransferase RlmN.